A 192-amino-acid chain; its full sequence is ATP synthase subunit b (192 aa).

The helical transmembrane segment at Leu7–Glu27 threads the bilayer.

Belongs to the ATPase B chain family. F-type ATPases have 2 components, F(1) - the catalytic core - and F(0) - the membrane proton channel. F(1) has five subunits: alpha(3), beta(3), gamma(1), delta(1), epsilon(1). F(0) has three main subunits: a(1), b(2) and c(10-14). The alpha and beta chains form an alternating ring which encloses part of the gamma chain. F(1) is attached to F(0) by a central stalk formed by the gamma and epsilon chains, while a peripheral stalk is formed by the delta and b chains.

The protein localises to the cell inner membrane. F(1)F(0) ATP synthase produces ATP from ADP in the presence of a proton or sodium gradient. F-type ATPases consist of two structural domains, F(1) containing the extramembraneous catalytic core and F(0) containing the membrane proton channel, linked together by a central stalk and a peripheral stalk. During catalysis, ATP synthesis in the catalytic domain of F(1) is coupled via a rotary mechanism of the central stalk subunits to proton translocation. Its function is as follows. Component of the F(0) channel, it forms part of the peripheral stalk, linking F(1) to F(0). In Oleidesulfovibrio alaskensis (strain ATCC BAA-1058 / DSM 17464 / G20) (Desulfovibrio alaskensis), this protein is ATP synthase subunit b.